A 733-amino-acid chain; its full sequence is DNA-binding protein SATB2 (733 aa).

The tract at residues 1 to 47 is disordered; the sequence is MERRSESPCLRDSPDRRSGSPDVKGPPPVKVARLEQNGSPMGARGRP. Serine 20 carries the phosphoserine modification. Residues lysine 24 and lysine 30 each participate in a glycyl lysine isopeptide (Lys-Gly) (interchain with G-Cter in SUMO2) cross-link. Serine 39 bears the Phosphoserine mark. The CMP domain occupies 57–158; sequence GLMIPVFCVV…VVTLKIQLQS (102 aa). Lysine 161 participates in a covalent cross-link: Glycyl lysine isopeptide (Lys-Gly) (interchain with G-Cter in SUMO2). The region spanning 161-234 is the CUTL domain; sequence KLEDLPAEQW…WYKKYKKIKV (74 aa). Lysine 233 is covalently cross-linked (Glycyl lysine isopeptide (Lys-Gly) (interchain with G-Cter in SUMO)). A Glycyl lysine isopeptide (Lys-Gly) (interchain with G-Cter in SUMO); alternate cross-link involves residue lysine 350. Lysine 350 participates in a covalent cross-link: Glycyl lysine isopeptide (Lys-Gly) (interchain with G-Cter in SUMO2); alternate. Residues 350-437 constitute a DNA-binding region (CUT 1); the sequence is KPEPTNSSVE…ERDRIYQDER (88 aa). The segment at 435-473 is disordered; that stretch reads DERERSMNPNVSMVSSASSSPSSSRTPQAKTSTPTTDLP. Over residues 441 to 458 the composition is skewed to low complexity; that stretch reads MNPNVSMVSSASSSPSSS. Serine 454 bears the Phosphoserine mark. Positions 459–470 are enriched in polar residues; it reads RTPQAKTSTPTT. A Phosphothreonine modification is found at threonine 467. Residues 473-560 constitute a DNA-binding region (CUT 2); that stretch reads PIKVDGANIN…ERDVIYEEES (88 aa). Residue lysine 475 forms a Glycyl lysine isopeptide (Lys-Gly) (interchain with G-Cter in SUMO2) linkage. Low complexity predominate over residues 580-593; it reads QVLHRQQSQPAKES. 2 disordered regions span residues 580–617 and 694–733; these read QVLH…KPRS and LLTE…IDQR. Phosphoserine is present on serine 594. Residues 615–674 constitute a DNA-binding region (homeobox); the sequence is PRSRTKISLEALGILQSFIHDVGLYPDQEAIHTLSAQLDLPKHTIIKFFQNQRYHVKHHG. Residues 694–708 show a composition bias toward acidic residues; that stretch reads LLTESEENDSEEGSE. Positions 709-733 are enriched in basic and acidic residues; it reads EMYKVEAEEENADKSKAAPAEIDQR. A Glycyl lysine isopeptide (Lys-Gly) (interchain with G-Cter in SUMO2) cross-link involves residue lysine 724.

Belongs to the CUT homeobox family. Interacts with ATF4 and RUNX2; resulting in enhanced DNA binding and transactivation by these transcription factors. Interacts with PIAS1. In terms of processing, sumoylated by PIAS1. Sumoylation promotes nuclear localization, but represses transcription factor activity. As to expression, high expression in adult brain, moderate expression in fetal brain, and weak expression in adult liver, kidney, and spinal cord and in select brain regions, including amygdala, corpus callosum, caudate nucleus, and hippocampus.

The protein resides in the nucleus matrix. Binds to DNA, at nuclear matrix- or scaffold-associated regions. Thought to recognize the sugar-phosphate structure of double-stranded DNA. Transcription factor controlling nuclear gene expression, by binding to matrix attachment regions (MARs) of DNA and inducing a local chromatin-loop remodeling. Acts as a docking site for several chromatin remodeling enzymes and also by recruiting corepressors (HDACs) or coactivators (HATs) directly to promoters and enhancers. Required for the initiation of the upper-layer neurons (UL1) specific genetic program and for the inactivation of deep-layer neurons (DL) and UL2 specific genes, probably by modulating BCL11B expression. Repressor of Ctip2 and regulatory determinant of corticocortical connections in the developing cerebral cortex. May play an important role in palate formation. Acts as a molecular node in a transcriptional network regulating skeletal development and osteoblast differentiation. The polypeptide is DNA-binding protein SATB2 (SATB2) (Homo sapiens (Human)).